We begin with the raw amino-acid sequence, 461 residues long: Tip elongation protein 1 (461 aa).

The region spanning 22-69 is the CAP-Gly domain; that stretch reads GEVENRKGVYVGLELLPEFAEFGKNRGVVDGREYFKTKNNEKTGIFVP. 5 positions are modified to phosphoserine: serine 82, serine 84, serine 289, serine 294, and serine 305. Positions 134–418 form a coiled coil; it reads TEKILQKRIE…RMSPAEFELE (285 aa). Residues 278–303 show a composition bias toward polar residues; the sequence is KANSSTANEKLSHMESSSPTLTNASF. The tract at residues 278-323 is disordered; it reads KANSSTANEKLSHMESSSPTLTNASFESPKRGKGSNDLPENHPQRR. Residue threonine 367 is modified to Phosphothreonine. The segment at 417 to 437 is disordered; it reads LETTQEVEENDSDSHDDEETW.

As to quaternary structure, monomer. Interacts with tea1 and tea2. Interacts with tea4 in the presence of tea1.

The protein localises to the cytoplasm. Its subcellular location is the cytoskeleton. Functionally, has a role in stabilizing and targeting the growing tips of the microtubules along the long axis of the cell, directing them to the ends of the cell. Acts as a cargo for tea2. The sequence is that of Tip elongation protein 1 (tip1) from Schizosaccharomyces pombe (strain 972 / ATCC 24843) (Fission yeast).